The primary structure comprises 198 residues: uncharacterized protein (198 aa).

Residues Glu51–His74 are disordered.

This is an uncharacterized protein from Homo sapiens (Human).